The primary structure comprises 504 residues: ATP synthase subunit alpha (504 aa).

Position 171 to 178 (171 to 178 (GDRQTGKT)) interacts with ATP.

This sequence belongs to the ATPase alpha/beta chains family. As to quaternary structure, F-type ATPases have 2 components, CF(1) - the catalytic core - and CF(0) - the membrane proton channel. CF(1) has five subunits: alpha(3), beta(3), gamma(1), delta(1), epsilon(1). CF(0) has three main subunits: a(1), b(2) and c(9-12). The alpha and beta chains form an alternating ring which encloses part of the gamma chain. CF(1) is attached to CF(0) by a central stalk formed by the gamma and epsilon chains, while a peripheral stalk is formed by the delta and b chains.

It is found in the cell inner membrane. It catalyses the reaction ATP + H2O + 4 H(+)(in) = ADP + phosphate + 5 H(+)(out). In terms of biological role, produces ATP from ADP in the presence of a proton gradient across the membrane. The alpha chain is a regulatory subunit. In Helicobacter hepaticus (strain ATCC 51449 / 3B1), this protein is ATP synthase subunit alpha.